The sequence spans 1371 residues: Probable serine/threonine-protein kinase DDB_G0293292 (1371 aa).

Protein kinase domains are found at residues 9 to 269 and 1131 to 1371; these read NKIL…HPNT and FKEV…QPTL. Residues 15 to 23 and K39 contribute to the ATP site; that span reads IDDGNTKRK. The Proton acceptor role is filled by D143.

It belongs to the protein kinase superfamily. Ser/Thr protein kinase family.

The catalysed reaction is L-seryl-[protein] + ATP = O-phospho-L-seryl-[protein] + ADP + H(+). It catalyses the reaction L-threonyl-[protein] + ATP = O-phospho-L-threonyl-[protein] + ADP + H(+). The polypeptide is Probable serine/threonine-protein kinase DDB_G0293292 (Dictyostelium discoideum (Social amoeba)).